The chain runs to 286 residues: Transcriptional regulator of yeast form adherence 4 (286 aa).

Low complexity-rich tracts occupy residues 1–29 (MSLPMSPVSPINTTTSTSTTTTPLSPPSS) and 37–65 (LSTSISNNSITSDSSLDSNTSTSSTTTTN). A disordered region spans residues 1–71 (MSLPMSPVSP…TTTNYGTKTP (71 aa)). 2 C2H2-type zinc fingers span residues 78-101 (FNCTLCQRAFTREEHLTRHTLSTH) and 107-130 (FTCGICSRPFSRRDLLLRHAKNLH). A disordered region spans residues 146–260 (HCNKDNDSKS…ITNSSTSHIH (115 aa)). Low complexity-rich tracts occupy residues 156 to 165 (GSDSNTNKTN) and 228 to 244 (SVPSTTTTSTTTVPTST). A compositionally biased stretch (polar residues) spans 245 to 260 (NNDTASITNSSTSHIH).

It localises to the nucleus. Functionally, transcription factor required for yeast cell adherence to silicone substrate. The protein is Transcriptional regulator of yeast form adherence 4 (TRY4) of Candida albicans (strain SC5314 / ATCC MYA-2876) (Yeast).